The sequence spans 30 residues: Peptidase 1 (30 aa).

Belongs to the peptidase C1 family.

The protein localises to the secreted. The catalysed reaction is Broad endopeptidase specificity.. Its function is as follows. Thiol protease that hydrolyzes proteins, with a preference for Phe or basic residues. This chain is Peptidase 1 (DERM1), found in Dermatophagoides microceras (House dust mite).